Reading from the N-terminus, the 762-residue chain is MAAPSNTAAVDQLTSDLANANMNGGEKTTVNTNVGASFTGEEIDTAGPTPSSAAPHPQASASLYVGELDPSVTEAMLFELFSQIGSVASIRVCRDAVTRRSLGYAYVNYNTTADGEKALEELNYTLIKGRPCRIMWSQRDPALRKTGQGNVFIKNLDVAIDNKALHDTFAAFGNILSCKVAQDENGNSKGYGFVHYETDEAASQAIKHVNGMLLNEKKVYVGHHIPKKDRQSKFDEMKANFTNIYVKNINPEVTDDEFRTLFEKYGDVTSSSLARDQETGKSRGFGFVNFTSHEDASKAVQELNEKEFHGQNLYVGRAQKKHEREEELRKSYEAARQEKASKYQGVNLYIKNLDDEVDDEKLRQLFSEFGPITSAKVMRDSITEPGEEGESKEGEESEKNKENKPEEKEGDDSKPEEKEGEDSKSKSKLGKSKGFGFVCFANPDDATKAVAEMNQRMVNNKPLYVALAQRKDVRKNQLEQSIQARNQLRMQQAAAAAGMPQQYMQAPVFYGPGSQPGFMPPAGGRGMPYPQGGMPMQPGRPGQFPAGFAAQQGGRGAMPQGIPPMYGLPGQFPPQGPFPQPNNPQFLAAMQQIQQSALAGGRGGPAGRGPMQGGVPVPGMPGGAGLPGFPPNARQQGPGAGRGAAAGRAPAGAPAGARGAGAPEGLQGQLAAVADNPGQQKQILGEAIFPKIQAIHPELAGKITGMLLEMDNTELVALVENDGALRSKVDEALAVYDDYVRQQGDGEGAQAPSKEEKTEEKA.

A disordered region spans residues 39–58 (TGEEIDTAGPTPSSAAPHPQ). Residues 48 to 58 (PTPSSAAPHPQ) show a composition bias toward low complexity. 4 RRM domains span residues 61-139 (ASLY…WSQR), 149-226 (GNVF…HHIP), 242-320 (TNIY…RAQK), and 346-470 (VNLY…LAQR). Disordered regions lie at residues 376-429 (KVMR…KSKL), 596-663 (SALA…AGAP), and 740-762 (VRQQ…EEKA). The span at 389–425 (GESKEGEESEKNKENKPEEKEGDDSKPEEKEGEDSKS) shows a compositional bias: basic and acidic residues. Over residues 600–612 (GGRGGPAGRGPMQ) the composition is skewed to gly residues. Residues 645–663 (AAGRAPAGAPAGARGAGAP) show a composition bias toward low complexity. A PABC domain is found at 664–741 (EGLQGQLAAV…ALAVYDDYVR (78 aa)). The segment covering 753-762 (SKEEKTEEKA) has biased composition (basic and acidic residues).

It belongs to the polyadenylate-binding protein type-1 family.

It localises to the cytoplasm. The protein resides in the nucleus. Functionally, binds the poly(A) tail of mRNA. Appears to be an important mediator of the multiple roles of the poly(A) tail in mRNA biogenesis, stability and translation. In the nucleus, involved in both mRNA cleavage and polyadenylation. Is also required for efficient mRNA export to the cytoplasm. Acts in concert with a poly(A)-specific nuclease (PAN) to affect poly(A) tail shortening, which may occur concomitantly with either nucleocytoplasmic mRNA transport or translational initiation. In the cytoplasm, stimulates translation initiation and regulates mRNA decay through translation termination-coupled poly(A) shortening, probably mediated by PAN. The chain is Polyadenylate-binding protein, cytoplasmic and nuclear (PAB1) from Pyricularia oryzae (strain 70-15 / ATCC MYA-4617 / FGSC 8958) (Rice blast fungus).